The sequence spans 562 residues: Putative transport protein Spro_1639 (562 aa).

5 helical membrane-spanning segments follow: residues 8–28 (LLNG…LCLG), 37–57 (LGNS…HFAI), 66–86 (FMLF…SIFF), 94–114 (MLAL…GKLF), and 158–178 (HLSL…IFGA). 2 consecutive RCK C-terminal domains span residues 202–288 (LDTD…SFRN) and 290–373 (KEVF…KIGF). A run of 5 helical transmembrane segments spans residues 383–403 (LLAF…TIQF), 406–426 (FSFG…LGFL), 447–467 (FGLM…IGNS), 475–495 (MLIA…LFGA), and 541–561 (IANV…PGIL).

It belongs to the AAE transporter (TC 2.A.81) family. YbjL subfamily.

The protein resides in the cell membrane. This chain is Putative transport protein Spro_1639, found in Serratia proteamaculans (strain 568).